A 299-amino-acid polypeptide reads, in one-letter code: MRMRPTLSWTPGADLPPGTTDLAPVADALRAGGVLVLSGAGISTESGIPDYRGEGGSLSRHTPMTYQDFTAHPEARRRYWARSHLGWRTFGRARPNAGHRSVAAFGRHGLLTGVITQNVDGLHQAAGSEGVVELHGSLDRVVCLSCGVLSPRRELARRLEEANAGFSPVAAGINPDGDADLTDEQVGDFRVVPCAVCGGVLKPDVVFFGENVPPRRVEHCRELVRGASSLLVLGSSLTVMSGLRFVRQAAEAGKPVLIVNRDATRGDRLAVTRVALPLGPALTTVADRLGLRVGDAATA.

Residues 15-292 form the Deacetylase sirtuin-type domain; the sequence is LPPGTTDLAP…TTVADRLGLR (278 aa). Residues 39 to 59 and 117 to 120 contribute to the NAD(+) site; these read GAGI…GSLS and QNVD. Catalysis depends on His135, which acts as the Proton acceptor. Residues Cys143, Cys146, Cys194, and Cys197 each coordinate Zn(2+). Residues 234-236 and Leu278 contribute to the NAD(+) site; that span reads GSS.

The protein belongs to the sirtuin family. Class II subfamily. Zn(2+) is required as a cofactor.

The protein resides in the cytoplasm. The catalysed reaction is N(6)-acetyl-L-lysyl-[protein] + NAD(+) + H2O = 2''-O-acetyl-ADP-D-ribose + nicotinamide + L-lysyl-[protein]. NAD-dependent protein deacetylase which modulates the activities of several enzymes which are inactive in their acetylated form. The chain is NAD-dependent protein deacetylase 1 from Streptomyces coelicolor (strain ATCC BAA-471 / A3(2) / M145).